A 433-amino-acid polypeptide reads, in one-letter code: AP-2 complex subunit mu (433 aa).

An MHD domain is found at 168–432 (RNELFLDVLE…IGRSGIYETR (265 aa)). Residues lysine 339, lysine 343, and lysine 352 each coordinate a 1,2-diacyl-sn-glycero-3-phospho-(1D-myo-inositol-3,4,5-trisphosphate).

The protein belongs to the adaptor complexes medium subunit family. In terms of assembly, adaptor protein complex 2 (AP-2) is a heterotetramer composed of two large adaptins (alpha-type subunit and beta-type subunit), a medium adaptin (mu-type subunit) and a small adaptin (sigma-type subunit).

The protein localises to the cell membrane. It is found in the membrane. Its subcellular location is the coated pit. Its function is as follows. Component of the adaptor complexes which link clathrin to receptors in coated vesicles. Clathrin-associated protein complexes are believed to interact with the cytoplasmic tails of membrane proteins, leading to their selection and concentration. AP50 is a subunit of the plasma membrane adaptor. The complex binds polyphosphoinositide-containing lipids. In Gallus gallus (Chicken), this protein is AP-2 complex subunit mu (AP2M1).